The primary structure comprises 131 residues: C-glycoside deglycosidase beta subunit (131 aa).

Belongs to the C-glycoside deglycosidase beta subunit family. As to quaternary structure, heterodimer composed of an alpha subunit (CarB1) and a beta subunit (CarC1). The cofactor is Mg(2+).

The enzyme catalyses 3''-dehydroisovitexin = 1,5-anhydro-D-erythro-hex-1-en-3-ulose + apigenin. With respect to regulation, activity is strongly reduced in the presence of chelating agents. Its function is as follows. Carbon-carbon bond-cleaving enzyme which participates in the metabolism of C-glycosides. Acts on the C6-glycosylated compound 3''-dehydroisovitexin (3''-oxo-isovitexin). Shows weak activity with 3''-dehydroisoorientin (3''-oxo-homoorientin) and 3'-dehydromangiferin (3'-oxo-mangiferin). The protein is C-glycoside deglycosidase beta subunit of Arthrobacter globiformis (strain ATCC 8010 / DSM 20124 / JCM 1332 / NBRC 12137 / NCIMB 8907 / NRRL B-2979 / 168).